A 51-amino-acid polypeptide reads, in one-letter code: Mitochondrial import receptor subunit TOM5 homolog (51 aa).

At M1 the chain carries N-acetylmethionine. K10 is covalently cross-linked (Glycyl lysine isopeptide (Lys-Gly) (interchain with G-Cter in SUMO2)). Residues 27 to 45 traverse the membrane as a helical segment; that stretch reads SIRNFLIYVALLRVTPFIL.

The protein belongs to the Tom5 family. As to quaternary structure, forms part of the preprotein translocase complex of the outer mitochondrial membrane (TOM complex) which consists of at least 7 different proteins (TOMM5, TOMM6, TOMM7, TOMM20, TOMM22, TOMM40 and TOMM70).

The protein localises to the mitochondrion outer membrane. This Bos taurus (Bovine) protein is Mitochondrial import receptor subunit TOM5 homolog.